The following is a 353-amino-acid chain: Rhodopsin (353 aa).

The Extracellular portion of the chain corresponds to Met1–Ala36. 2 N-linked (GlcNAc...) asparagine glycosylation sites follow: Asn2 and Asn15. A helical membrane pass occupies residues Tyr37–Val61. Residues Thr62–Asn73 are Cytoplasmic-facing. A helical transmembrane segment spans residues Tyr74–Tyr96. Residues Thr97–Cys110 are Extracellular-facing. Cys110 and Cys187 are oxidised to a cystine. The chain crosses the membrane as a helical span at residues Asn111–Ile133. The 'Ionic lock' involved in activated form stabilization signature appears at Glu134 to Trp136. Residues Glu134–His152 are Cytoplasmic-facing. A helical transmembrane segment spans residues Ala153 to Val173. Residues Gly174–Ser202 lie on the Extracellular side of the membrane. Residue Asn200 is glycosylated (N-linked (GlcNAc...) asparagine). The helical transmembrane segment at Phe203–Gly224 threads the bilayer. The Cytoplasmic portion of the chain corresponds to Arg225–Arg252. Residues Met253–Trp274 traverse the membrane as a helical segment. Over Ile275 to Val286 the chain is Extracellular. The chain crosses the membrane as a helical span at residues Phe287–Cys308. Lys296 is subject to N6-(retinylidene)lysine. Residues Leu309–Ala353 are Cytoplasmic-facing. S-palmitoyl cysteine attachment occurs at residues Cys322 and Cys323. Residues Glu331–Ala353 are disordered. Residues Ala334 to Ala353 are compositionally biased toward low complexity.

It belongs to the G-protein coupled receptor 1 family. Opsin subfamily. In terms of processing, phosphorylated on some or all of the serine and threonine residues present in the C-terminal region. Contains one covalently linked retinal chromophore.

It is found in the membrane. Its subcellular location is the cell projection. The protein resides in the cilium. It localises to the photoreceptor outer segment. Functionally, photoreceptor required for image-forming vision at low light intensity. While most salt water fish species use retinal as chromophore, most freshwater fish use 3-dehydroretinal, or a mixture of retinal and 3-dehydroretinal. Light-induced isomerization of 11-cis to all-trans retinal triggers a conformational change that activates signaling via G-proteins. Subsequent receptor phosphorylation mediates displacement of the bound G-protein alpha subunit by arrestin and terminates signaling. This is Rhodopsin (rho) from Diplodus vulgaris (Common two-banded seabream).